Consider the following 399-residue polypeptide: Phosphoprotein (399 aa).

2 stretches are compositionally biased toward polar residues: residues 30 to 46 (ATSQSSLNKPPSQSSRT) and 82 to 112 (GRQNLDSLSMISNKPQTGTLLMGSDTQLPSP). The disordered stretch occupies residues 30–112 (ATSQSSLNKP…MGSDTQLPSP (83 aa)). The tract at residues 224 to 287 (NYASEILDAI…ITTMKIMDPG (64 aa)) is multimerization. A coiled-coil region spans residues 226 to 253 (ASEILDAIKALEVRLDRIEGKVDKIMLT).

Belongs to the rubulavirus/avulavirus P protein family. In terms of assembly, homotetramer. Interacts (via multimerization domain) with polymerase L; this interaction forms the polymerase L-P complex. Interacts (via N-terminus) with N0 (via Ncore); this interaction allows P to chaperon N0 to avoid N polymerization before encapsidation. Interacts (via C-terminus) with N-RNA template; this interaction positions the polymerase on the template for both transcription and replication.

In terms of biological role, essential cofactor of the RNA polymerase L that plays a central role in the transcription and replication by forming the polymerase complex with RNA polymerase L and recruiting L to the genomic N-RNA template for RNA synthesis. Also plays a central role in the encapsidation of nascent RNA chains by forming the encapsidation complex with the nucleocapsid protein N (N-P complex). Acts as a chaperone for newly synthesized free N protein, so-called N0, allowing encapsidation of nascent RNA chains during replication. The nucleoprotein protein N prevents excessive phosphorylation of P, which leads to down-regulation of viral transcription/ replication. Participates, together with N, in the formation of viral factories (viroplasms), which are large inclusions in the host cytoplasm where replication takes place. The polypeptide is Phosphoprotein (P/V) (Human parainfluenza 4a virus (strain Toshiba) (HPIV-4a)).